A 170-amino-acid chain; its full sequence is Bifunctional protein PyrR (170 aa).

Positions 90 to 102 (LVLVDDVLMSGRT) match the PRPP-binding motif.

The protein belongs to the purine/pyrimidine phosphoribosyltransferase family. PyrR subfamily.

The enzyme catalyses UMP + diphosphate = 5-phospho-alpha-D-ribose 1-diphosphate + uracil. Functionally, regulates the transcription of the pyrimidine nucleotide (pyr) operon in response to exogenous pyrimidines. In terms of biological role, also displays a weak uracil phosphoribosyltransferase activity which is not physiologically significant. This is Bifunctional protein PyrR from Pseudomonas aeruginosa (strain LESB58).